A 133-amino-acid chain; its full sequence is Small ribosomal subunit protein eS24z (133 aa).

Residues 104–133 (KSRKQIKERKNRAKKIRGVKKTKAGDAKKK) form a disordered region. Over residues 109-125 (IKERKNRAKKIRGVKKT) the composition is skewed to basic residues.

This sequence belongs to the eukaryotic ribosomal protein eS24 family.

The chain is Small ribosomal subunit protein eS24z (RPS24A) from Arabidopsis thaliana (Mouse-ear cress).